We begin with the raw amino-acid sequence, 978 residues long: Serine/threonine-protein kinase PLK4 (978 aa).

The Protein kinase domain maps to 13 to 266 (FQVLDLLGKG…LSGILDHPFI (254 aa)). ATP contacts are provided by residues 19–27 (LGKGGFACV) and lysine 42. Aspartate 137 acts as the Proton acceptor in catalysis. Composition is skewed to polar residues over residues 271–282 (LNTKYSSPTRQH) and 291–304 (SLDS…TIST). Disordered regions lie at residues 271–381 (LNTK…TRTS), 489–578 (IEQP…AERL), 788–818 (AWKN…SSPS), and 838–869 (AQTT…QPIP). Basic and acidic residues predominate over residues 324 to 335 (RTSDIWPRDPKH). 2 stretches are compositionally biased toward polar residues: residues 351-362 (TENVTTGSSSHV) and 371-381 (AQYSGLKTRTS). Composition is skewed to basic and acidic residues over residues 518-527 (GSDSVSKDFD) and 536-566 (ESRR…DKSL). The 114-residue stretch at 565-678 (SLGELTEPLN…AKFVQLVRKL (114 aa)) folds into the Cryptic POLO box 1 (CPB1) domain. A Cryptic POLO box 2 (CPB2) domain is found at 679-792 (TPKVTLYSKH…GRRPPAWKNS (114 aa)). Polar residues predominate over residues 801-818 (QQGCSNGQSQPVLPSSPS). Basic residues predominate over residues 848–862 (KSRKTSPSKTSRHKQ). A POLO box domain is found at 895-973 (HVCKMAFVDG…LPAVIKTLAT (79 aa)).

Belongs to the protein kinase superfamily. Ser/Thr protein kinase family. CDC5/Polo subfamily. Homodimer. In terms of processing, ubiquitinated; leading to its degradation by the proteasome.

It localises to the cytoplasm. Its subcellular location is the cytoskeleton. The protein localises to the microtubule organizing center. It is found in the centrosome. The protein resides in the centriole. It carries out the reaction L-seryl-[protein] + ATP = O-phospho-L-seryl-[protein] + ADP + H(+). The enzyme catalyses L-threonyl-[protein] + ATP = O-phospho-L-threonyl-[protein] + ADP + H(+). Functionally, serine/threonine-protein kinase that plays a central role in centriole duplication. Able to trigger procentriole formation on the surface of the mother centriole cylinder, leading to the recruitment of centriole biogenesis proteins. When overexpressed, it is able to induce centrosome amplification through the simultaneous generation of multiple procentrioles adjoining each parental centriole during S phase. The polypeptide is Serine/threonine-protein kinase PLK4 (Nematostella vectensis (Starlet sea anemone)).